We begin with the raw amino-acid sequence, 445 residues long: Phosphoglucosamine mutase (445 aa).

S101 acts as the Phosphoserine intermediate in catalysis. Mg(2+) contacts are provided by S101, D240, D242, and D244. Residue S101 is modified to Phosphoserine.

The protein belongs to the phosphohexose mutase family. Requires Mg(2+) as cofactor. Post-translationally, activated by phosphorylation.

It carries out the reaction alpha-D-glucosamine 1-phosphate = D-glucosamine 6-phosphate. Functionally, catalyzes the conversion of glucosamine-6-phosphate to glucosamine-1-phosphate. This is Phosphoglucosamine mutase from Pseudomonas aeruginosa (strain UCBPP-PA14).